The sequence spans 153 residues: UPF0311 protein Rpal_1987 (153 aa).

It belongs to the UPF0311 family.

In Rhodopseudomonas palustris (strain TIE-1), this protein is UPF0311 protein Rpal_1987.